Reading from the N-terminus, the 438-residue chain is Trigger factor (438 aa).

Residues 163–249 (EDFVLIDYEG…LKEIRKQILP (87 aa)) form the PPIase FKBP-type domain.

The protein belongs to the FKBP-type PPIase family. Tig subfamily.

It is found in the cytoplasm. The catalysed reaction is [protein]-peptidylproline (omega=180) = [protein]-peptidylproline (omega=0). In terms of biological role, involved in protein export. Acts as a chaperone by maintaining the newly synthesized protein in an open conformation. Functions as a peptidyl-prolyl cis-trans isomerase. This chain is Trigger factor, found in Desulfatibacillum aliphaticivorans.